The primary structure comprises 176 residues: ATP-dependent protease subunit HslV (176 aa).

Residue Thr-2 is part of the active site. Na(+) is bound by residues Ala-157, Cys-160, and Thr-163.

It belongs to the peptidase T1B family. HslV subfamily. A double ring-shaped homohexamer of HslV is capped on each side by a ring-shaped HslU homohexamer. The assembly of the HslU/HslV complex is dependent on binding of ATP.

It is found in the cytoplasm. The catalysed reaction is ATP-dependent cleavage of peptide bonds with broad specificity.. With respect to regulation, allosterically activated by HslU binding. In terms of biological role, protease subunit of a proteasome-like degradation complex believed to be a general protein degrading machinery. This chain is ATP-dependent protease subunit HslV, found in Buchnera aphidicola subsp. Schizaphis graminum (strain Sg).